We begin with the raw amino-acid sequence, 719 residues long: T-cell immunomodulatory protein homolog (719 aa).

The N-terminal stretch at 1–32 is a signal peptide; sequence MYNFLSCKKKSIILQVLLIICTYNILLNFVNI. The Extracellular portion of the chain corresponds to 33–677; the sequence is FVNNNEKNHK…LSVNPSKKFY (645 aa). N-linked (GlcNAc...) asparagine glycans are attached at residues asparagine 144, asparagine 277, asparagine 410, asparagine 540, and asparagine 659. Residues 678–697 form a helical membrane-spanning segment; that stretch reads SILYITLICLSVIGVLIFIL. Residues 698 to 719 are Cytoplasmic-facing; it reads DRKEKVEDSKEELGFKSHFVIG.

Belongs to the TIP family.

It localises to the membrane. Its function is as follows. May protect the parasite against attack by the host immune system by immunomodulation. The sequence is that of T-cell immunomodulatory protein homolog from Plasmodium falciparum (isolate 3D7).